A 451-amino-acid polypeptide reads, in one-letter code: Methionine aminopeptidase 2-2 (451 aa).

Residues 1-101 (MAAKVADDVA…IDEVFPNDSY (101 aa)) form a disordered region. Residues 37–51 (EHEDSDDDNEAEEGA) are compositionally biased toward acidic residues. Residues 60 to 73 (KKKKKRKPRKKKKA) are compositionally biased toward basic residues. His204 lines the substrate pocket. A divalent metal cation is bound by residues Asp224, Asp235, and His304. His312 serves as a coordination point for substrate. A divalent metal cation-binding residues include Glu337 and Glu432.

This sequence belongs to the peptidase M24A family. Methionine aminopeptidase eukaryotic type 2 subfamily. It depends on Co(2+) as a cofactor. The cofactor is Zn(2+). Mn(2+) is required as a cofactor. Requires Fe(2+) as cofactor.

The protein localises to the cytoplasm. The catalysed reaction is Release of N-terminal amino acids, preferentially methionine, from peptides and arylamides.. Cotranslationally removes the N-terminal methionine from nascent proteins. The N-terminal methionine is often cleaved when the second residue in the primary sequence is small and uncharged (Met-Ala-, Cys, Gly, Pro, Ser, Thr, or Val). The polypeptide is Methionine aminopeptidase 2-2 (Pyrenophora tritici-repentis (strain Pt-1C-BFP) (Wheat tan spot fungus)).